The sequence spans 357 residues: Peptide chain release factor 1 (357 aa).

An N5-methylglutamine modification is found at glutamine 234.

It belongs to the prokaryotic/mitochondrial release factor family. In terms of processing, methylated by PrmC. Methylation increases the termination efficiency of RF1.

It is found in the cytoplasm. Its function is as follows. Peptide chain release factor 1 directs the termination of translation in response to the peptide chain termination codons UAG and UAA. This is Peptide chain release factor 1 from Lactococcus lactis subsp. cremoris (strain SK11).